A 268-amino-acid chain; its full sequence is MQNPTTTPGSLLTAMRANPPLVQCITNFVAMNIAANVMLAAGASPAMVHAEEEAGEFAAISGALTINIGTLSTGWLAGMTSAAQAANKAGKPWVLDPVAHYATSFRRRSVAQLLELQPTIIRGNASEIIALAGGTSRGQGVDSRDPVELAEEAAVQLAQKHRTIVAVTGATDFVTDGNKASRIEGGSPLMPQVTALGCSLTCLVGAFAATRPDHPLDATVAALAAFAVAGERAGRQVDGPGSFSWRFLDALAALDEKAIDSEARVISL.

A substrate-binding site is contributed by M47. Positions 122 and 168 each coordinate ATP. Position 195 (A195) interacts with substrate.

Belongs to the Thz kinase family. Requires Mg(2+) as cofactor.

It catalyses the reaction 5-(2-hydroxyethyl)-4-methylthiazole + ATP = 4-methyl-5-(2-phosphooxyethyl)-thiazole + ADP + H(+). The protein operates within cofactor biosynthesis; thiamine diphosphate biosynthesis; 4-methyl-5-(2-phosphoethyl)-thiazole from 5-(2-hydroxyethyl)-4-methylthiazole: step 1/1. Functionally, catalyzes the phosphorylation of the hydroxyl group of 4-methyl-5-beta-hydroxyethylthiazole (THZ). This chain is Hydroxyethylthiazole kinase, found in Rhizobium rhizogenes (strain K84 / ATCC BAA-868) (Agrobacterium radiobacter).